The following is a 1724-amino-acid chain: Protein scribble homolog (1724 aa).

Residues 1 to 821 (MLKCIPLWRC…MTVLRERMVE (821 aa)) form a sufficient for targeting to adherens junction region. LRR repeat units lie at residues 11-34 (NRHVESVDKRHCSLTAVPDEIYRY), 35-58 (NRSLEELLLDANQLRELPKPFFRL), 59-81 (HNLRKLGLSDNEIQKLPPDVANF), 83-105 (QLVELDISRNDISEIPENIKFCQ), 107-127 (LEIADFSGNPLTRLPDGFTQL), 128-150 (RGLAHLSLNDVSLQSLPNDIGNL), 151-174 (SNLVTLELRENLLKSLPSSLSFLV), 176-196 (LEQLDLGSNVLEVLPDTLGAL), 197-219 (PNLRELWLDRNQLSSLPPELGNL), 221-242 (QLVCLDVSENRLSELPTEISGL), 244-265 (ALTDLLLSENLLEILPDSIGSL), 266-288 (KKLSILKVNQNRLVHLTDSIGEC), 289-311 (ENLTELMLTENLLQSLPRSLGKL), 312-334 (KKLTNLNVDRNRLSSVPAELGGC), 336-357 (SLNVLSLRDNRLGKLPPELANA), 359-380 (ELHVLDVAGNRLQNLPFALANL), and 382-405 (LKAMWLAENQSQPMLKFQTEDDEQ). 3 disordered regions span residues 451–484 (RDDSKHEEEDDETAADKRGLQRRATPHPSELKVM), 496–620 (YTAR…RKDT), and 646–683 (SHDGLSPTAHTPENERDGEDDEEEEEDEDEEDDLHTPF). Residues 518–534 (SNQSHDSQASSSTTSAT) are compositionally biased toward low complexity. A compositionally biased stretch (acidic residues) spans 554–567 (VQEEEDLDEMEVEY). Residues 574–583 (FAEEPIIRGG) show a composition bias toward basic and acidic residues. Acidic residues predominate over residues 584–598 (DEDDDYDNDDDDAER). A compositionally biased stretch (basic and acidic residues) spans 611-620 (EKQRLIRKDT). Acidic residues predominate over residues 661–678 (RDGEDDEEEEEDEDEEDD). 4 PDZ domains span residues 731–818 (TLSI…LRER), 867–955 (ATCL…DREQ), 1005–1094 (EVTL…RRDP), and 1101–1193 (EIVI…CDGF). The disordered stretch occupies residues 955–995 (QSSVGGASPRTRPHSPPPPEPSDSPEQEDGGDEHLGNHLNC). Disordered stretches follow at residues 1283–1407 (LQKV…DRQK), 1414–1433 (KQQTPDKPKPRISLVGEDDL), 1449–1468 (REFMLDEDEEEEEEDLAKQV), and 1488–1555 (SLGS…GESA). A compositionally biased stretch (basic and acidic residues) spans 1295-1306 (FRIDSPVRDAAH). Composition is skewed to polar residues over residues 1308–1329 (PHNSQSNIHFPSNANTKDNAST), 1346–1357 (PASQDGHSSPNP), and 1364–1385 (PINSQTTDLYSPRNNVSAKQPS). Over residues 1395-1407 (HSPEQRSFKDRQK) the composition is skewed to basic and acidic residues. Positions 1430-1461 (EDDLKKMKEEEAKRIEQRAREFMLDEDEEEEE) form a coiled coil. Positions 1453–1463 (LDEDEEEEEED) are enriched in acidic residues. Polar residues predominate over residues 1490–1506 (GSPTSRQCATPPNYSAT). Low complexity predominate over residues 1507–1518 (PPSHCGSSGPSS). Over residues 1521–1538 (GKGDSQRNSVEDSFRLEQ) the composition is skewed to basic and acidic residues. Serine 1609 carries the post-translational modification Phosphoserine. The tract at residues 1621-1684 (IAKSKEGKKR…FMDESSSNAV (64 aa)) is disordered. Positions 1623–1632 (KSKEGKKRGT) are enriched in basic and acidic residues.

Post-translationally, palmitoylated.

Its subcellular location is the cell membrane. It localises to the cell junction. It is found in the adherens junction. The protein resides in the cell projection. The protein localises to the lamellipodium. Its subcellular location is the cytoplasm. It localises to the postsynapse. It is found in the presynapse. Scaffold protein involved in different aspects of polarized cells differentiation regulating epithelial and neuronal morphogenesis. Regulates the caudal migration of the nVII motor neurons. Required for convergent extension movements during gastrulation. This Danio rerio (Zebrafish) protein is Protein scribble homolog (scrib).